Here is a 160-residue protein sequence, read N- to C-terminus: uncharacterized protein (160 aa).

Positions 20-152 (EREIWVLYMK…VYEGLSILSR (133 aa)) constitute an HTH marR-type domain. Residues 66-89 (VSDIAEKMGASLSNTTGLLDRLEK) constitute a DNA-binding region (H-T-H motif).

This is an uncharacterized protein from Bacillus subtilis (strain 168).